The chain runs to 309 residues: Porphobilinogen deaminase (309 aa).

Cys242 carries the S-(dipyrrolylmethanemethyl)cysteine modification.

It belongs to the HMBS family. Monomer. It depends on dipyrromethane as a cofactor.

It carries out the reaction 4 porphobilinogen + H2O = hydroxymethylbilane + 4 NH4(+). It functions in the pathway porphyrin-containing compound metabolism; protoporphyrin-IX biosynthesis; coproporphyrinogen-III from 5-aminolevulinate: step 2/4. Functionally, tetrapolymerization of the monopyrrole PBG into the hydroxymethylbilane pre-uroporphyrinogen in several discrete steps. In Syntrophobacter fumaroxidans (strain DSM 10017 / MPOB), this protein is Porphobilinogen deaminase.